Consider the following 517-residue polypeptide: Probable protein phosphatase 2C 20 (517 aa).

Residues M1–K59 form a disordered region. Residues W28 to D39 are compositionally biased toward basic and acidic residues. The 304-residue stretch at K70 to F373 folds into the PPM-type phosphatase domain. D105, G106, E323, and D364 together coordinate Mn(2+). The disordered stretch occupies residues A380–W517. The segment covering G402–P414 has biased composition (polar residues). Residues D438 to D455 are compositionally biased toward low complexity. Residues L499–W517 show a composition bias toward basic and acidic residues.

This sequence belongs to the PP2C family. Mg(2+) serves as cofactor. It depends on Mn(2+) as a cofactor.

The catalysed reaction is O-phospho-L-seryl-[protein] + H2O = L-seryl-[protein] + phosphate. The enzyme catalyses O-phospho-L-threonyl-[protein] + H2O = L-threonyl-[protein] + phosphate. The chain is Probable protein phosphatase 2C 20 from Oryza sativa subsp. japonica (Rice).